The following is a 405-amino-acid chain: Nuclear hormone receptor family member nhr-199 (405 aa).

A DNA-binding region (nuclear receptor) is located at residues 20–111; that stretch reads IPYCLICSEV…MGMQRSSVQQ (92 aa). NR C4-type zinc fingers lie at residues 23-44 and 60-94; these read CLIC…CRAC and CGRN…CKAC. Positions 126–376 constitute an NR LBD domain; it reads RGKPVLNKLR…PFSRIHGNQK (251 aa).

It belongs to the nuclear hormone receptor family.

It localises to the nucleus. Its function is as follows. Orphan nuclear receptor. This Caenorhabditis elegans protein is Nuclear hormone receptor family member nhr-199 (nhr-199).